A 518-amino-acid chain; its full sequence is Glutamate--cysteine ligase (518 aa).

Belongs to the glutamate--cysteine ligase type 1 family. Type 1 subfamily.

The enzyme catalyses L-cysteine + L-glutamate + ATP = gamma-L-glutamyl-L-cysteine + ADP + phosphate + H(+). The protein operates within sulfur metabolism; glutathione biosynthesis; glutathione from L-cysteine and L-glutamate: step 1/2. The chain is Glutamate--cysteine ligase from Buchnera aphidicola subsp. Acyrthosiphon pisum (strain 5A).